We begin with the raw amino-acid sequence, 288 residues long: G1/S-specific cyclin-D2 (288 aa).

The 126-residue stretch at 26-151 folds into the Cyclin N-terminal domain; the sequence is LQNLLTIEER…VLGKLKWNLA (126 aa). The disordered stretch occupies residues 264-288; it reads QHNGSKSVEDPDQATTPTDVRDVDL. The residue at position 270 (Ser270) is a Phosphoserine. Residue Thr279 is modified to Phosphothreonine.

Belongs to the cyclin family. Cyclin D subfamily. In terms of assembly, interacts with either CDK4 or CDK6 protein kinase to form a serine/threonine kinase holoenzyme complex. The cyclin subunit imparts substrate specificity to the complex. Post-translationally, phosphorylation at Thr-279 by MAP kinases is required for ubiquitination and degradation by the DCX(AMBRA1) complex. Ubiquitinated by the DCX(AMBRA1) complex during the transition from G1 to S cell phase, leading to its degradation: ubiquitination is dependent on Thr-279 phosphorylation. The DCX(AMBRA1) complex represents the major regulator of CCND2 stability during the G1/S transition. Polyubiquitinated by the SCF(FBXL2) complex, leading to proteasomal degradation.

The protein localises to the nucleus. Its subcellular location is the cytoplasm. It localises to the nucleus membrane. Functionally, regulatory component of the cyclin D2-CDK4 (DC) complex that phosphorylates and inhibits members of the retinoblastoma (RB) protein family including RB1 and regulates the cell-cycle during G(1)/S transition. Phosphorylation of RB1 allows dissociation of the transcription factor E2F from the RB/E2F complex and the subsequent transcription of E2F target genes which are responsible for the progression through the G(1) phase. Hypophosphorylates RB1 in early G(1) phase. Cyclin D-CDK4 complexes are major integrators of various mitogenenic and antimitogenic signals. The protein is G1/S-specific cyclin-D2 (Ccnd2) of Rattus norvegicus (Rat).